The following is a 632-amino-acid chain: Probable extracellular metalloproteinase 2 (632 aa).

The signal sequence occupies residues 1 to 19 (MHGLLLAGLAAALPLGVAG). A propeptide spanning residues 20 to 244 (LPARQQSGLS…VHNVVDYVAS (225 aa)) is cleaved from the precursor. Residues asparagine 81 and asparagine 270 are each glycosylated (N-linked (GlcNAc...) asparagine). Histidine 429 is a binding site for Zn(2+). Residue glutamate 430 is part of the active site. Histidine 433 serves as a coordination point for Zn(2+).

The protein belongs to the peptidase M36 family. It depends on Zn(2+) as a cofactor.

The protein localises to the secreted. Functionally, secreted metalloproteinase probably acting as a virulence factor. This is Probable extracellular metalloproteinase 2 (MEP2) from Arthroderma benhamiae (strain ATCC MYA-4681 / CBS 112371) (Trichophyton mentagrophytes).